A 64-amino-acid chain; its full sequence is Small ribosomal subunit protein eS17 (64 aa).

It belongs to the eukaryotic ribosomal protein eS17 family.

This is Small ribosomal subunit protein eS17 from Methanocorpusculum labreanum (strain ATCC 43576 / DSM 4855 / Z).